An 88-amino-acid chain; its full sequence is Putative regulatory protein Npun_R3866 (88 aa).

The protein belongs to the RemA family.

This Nostoc punctiforme (strain ATCC 29133 / PCC 73102) protein is Putative regulatory protein Npun_R3866.